Consider the following 488-residue polypeptide: Katanin p60 ATPase-containing subunit A-like 1 (488 aa).

Residue Met1 is modified to N-acetylmethionine. Positions 95 to 179 are disordered; sequence DPAVWPPPVP…GASDSEIPKF (85 aa). The segment covering 116–127 has biased composition (basic and acidic residues); it reads PNREVRPLRKDV. Residues 128–138 are compositionally biased toward low complexity; sequence GAGARGLVGRA. Over residues 142–167 the composition is skewed to basic and acidic residues; sequence SKSDKPASRDKDYRARGRDDKARKNV. Ser172 carries the post-translational modification Phosphoserine. An ATP-binding site is contributed by 246–253; it reads GPPGTGKT.

This sequence belongs to the AAA ATPase family. Katanin p60 subunit A1 subfamily. A-like 1 sub-subfamily. As to quaternary structure, interacts with KATNB1 and KATNBL1. In terms of tissue distribution, widely expressed, including in testis, brain, heart, lung, kidney, liver, spleen, seminal vesicles and ovary. In testis, restricted to Sertoli cells within the seminiferous epithelium (at protein level).

The protein resides in the cytoplasm. It is found in the cytoskeleton. It localises to the spindle pole. The protein localises to the spindle. It catalyses the reaction n ATP + n H2O + a microtubule = n ADP + n phosphate + (n+1) alpha/beta tubulin heterodimers.. Regulates microtubule dynamics in Sertoli cells, a process that is essential for spermiogenesis and male fertility. Severs microtubules in an ATP-dependent manner, promoting rapid reorganization of cellular microtubule arrays. Has microtubule-severing activity in vitro. This Mus musculus (Mouse) protein is Katanin p60 ATPase-containing subunit A-like 1 (Katnal1).